A 404-amino-acid chain; its full sequence is V-set and immunoglobulin domain-containing protein 1 (404 aa).

The N-terminal stretch at 1-22 is a signal peptide; that stretch reads MMVFAFWKVFLILNCLAGQVNM. The region spanning 23–133 is the Ig-like V-type domain; that stretch reads VQVTIPDTFV…DFFGKNQGIL (111 aa). At 23-233 the chain is on the extracellular side; it reads VQVTIPDTFV…EIDLTSSDPE (211 aa). Asn39 carries N-linked (GlcNAc...) asparagine glycosylation. Cystine bridges form between Cys44-Cys117 and Cys162-Cys212. The Ig-like C2-type domain maps to 141 to 228; that stretch reads PSKPFCSIQG…GNSSCEIDLT (88 aa). Asn201 and Asn220 each carry an N-linked (GlcNAc...) asparagine glycan. Residues 234-254 form a helical membrane-spanning segment; the sequence is VGIIIGALVGALTGAAIIICV. Residues 255–404 are Cytoplasmic-facing; sequence VYFARNKVKS…REEEKETVKA (150 aa). 2 disordered regions span residues 266–285 and 298–404; these read QKNLNSSTELEPMTKVHHSR and EGTL…TVKA. A phosphoserine mark is found at Ser271 and Ser272. Residues 301 to 314 are compositionally biased toward polar residues; sequence LPSSIHASHNTEPT. Over residues 357-383 the composition is skewed to acidic residues; sequence MELEPETEPEPEPEPEPQPELESELEP. A compositionally biased stretch (basic and acidic residues) spans 393–404; sequence PMREEEKETVKA.

The protein resides in the membrane. This chain is V-set and immunoglobulin domain-containing protein 1 (Vsig1), found in Rattus norvegicus (Rat).